Consider the following 490-residue polypeptide: Sporulation-specific protein 1 (490 aa).

One can recognise a Protein kinase domain in the interval 18–272 (YSIQSCIGRG…AYNLLSFEFV (255 aa)). ATP is bound by residues 24 to 32 (IGRGNFGDV) and Lys47. The active-site Proton acceptor is the Asp141.

The protein belongs to the protein kinase superfamily. STE Ser/Thr protein kinase family. STE20 subfamily.

It is found in the nucleus. It localises to the cytoplasm. It catalyses the reaction L-seryl-[protein] + ATP = O-phospho-L-seryl-[protein] + ADP + H(+). It carries out the reaction L-threonyl-[protein] + ATP = O-phospho-L-threonyl-[protein] + ADP + H(+). Its function is as follows. Serine/threonine protein kinase required for spore wall development. The protein is Sporulation-specific protein 1 (SPS1) of Saccharomyces cerevisiae (strain ATCC 204508 / S288c) (Baker's yeast).